Consider the following 380-residue polypeptide: MTDYPIKYRLIKTEKHTGARLGEIITPHGTFPTPMFMPVGTQATVKTQSPEELKAIGSGIILSNTYHLWLRPGDELIARSGGLHKFMNWDQPILTDSGGFQVYSLADSRNITEEGVTFKNHLNGSKMFLSPEKAISIQNNLGSDIMMSFDECPQFYQPYDYVKKSIERTSRWAERGLKAHRRPHDQGLFGIVQGAGFEDLRRQSAADLVAMDFLGYSIGGLAVGESHEEMNAVLDFTTPLLPENKPRYLMGVGAPDSLIDGVIRGVDMFDCVLPTRIARNGTCMTSEGRLVIKNAKFAEDFTPLDHDCDCYTCQNYSRAYIRHLLKADETFGIRLTSYHNLYFLVNLMKKVRQAIMDDNLLEFRQDFLERYGYNKSNRNF.

Residue aspartate 96 is the Proton acceptor of the active site. Residues 96–100 (DSGGF), aspartate 150, glutamine 193, and glycine 220 contribute to the substrate site. The RNA binding stretch occupies residues 251-257 (GVGAPDS). The active-site Nucleophile is the aspartate 270. The RNA binding; important for wobble base 34 recognition stretch occupies residues 275–279 (TRIAR). Residues cysteine 308, cysteine 310, cysteine 313, and histidine 339 each contribute to the Zn(2+) site.

This sequence belongs to the queuine tRNA-ribosyltransferase family. As to quaternary structure, homodimer. Within each dimer, one monomer is responsible for RNA recognition and catalysis, while the other monomer binds to the replacement base PreQ1. It depends on Zn(2+) as a cofactor.

It carries out the reaction 7-aminomethyl-7-carbaguanine + guanosine(34) in tRNA = 7-aminomethyl-7-carbaguanosine(34) in tRNA + guanine. The protein operates within tRNA modification; tRNA-queuosine biosynthesis. In terms of biological role, catalyzes the base-exchange of a guanine (G) residue with the queuine precursor 7-aminomethyl-7-deazaguanine (PreQ1) at position 34 (anticodon wobble position) in tRNAs with GU(N) anticodons (tRNA-Asp, -Asn, -His and -Tyr). Catalysis occurs through a double-displacement mechanism. The nucleophile active site attacks the C1' of nucleotide 34 to detach the guanine base from the RNA, forming a covalent enzyme-RNA intermediate. The proton acceptor active site deprotonates the incoming PreQ1, allowing a nucleophilic attack on the C1' of the ribose to form the product. After dissociation, two additional enzymatic reactions on the tRNA convert PreQ1 to queuine (Q), resulting in the hypermodified nucleoside queuosine (7-(((4,5-cis-dihydroxy-2-cyclopenten-1-yl)amino)methyl)-7-deazaguanosine). The polypeptide is Queuine tRNA-ribosyltransferase (Streptococcus pyogenes serotype M6 (strain ATCC BAA-946 / MGAS10394)).